The sequence spans 199 residues: Small ribosomal subunit protein eS6 (199 aa).

Positions 172 to 183 (KEQREKRSESLA) are enriched in basic and acidic residues. A disordered region spans residues 172 to 199 (KEQREKRSESLAKKRSRLSAASKPSIAA).

Belongs to the eukaryotic ribosomal protein eS6 family. Ribosomal protein S6 is the major substrate of protein kinases in eukaryote ribosomes.

Component of the 40S small ribosomal subunit. Plays an important role in controlling cell growth and proliferation through the selective translation of particular classes of mRNA. In Nicotiana tabacum (Common tobacco), this protein is Small ribosomal subunit protein eS6 (RPS6).